Consider the following 244-residue polypeptide: Eukaryotic translation initiation factor 4E type 1B (244 aa).

The segment covering methionine 1–serine 26 has biased composition (basic and acidic residues). Positions methionine 1–proline 57 are disordered. The tract at residues histidine 65–glutamine 68 is EIF4EBP1/2/3 binding. Tryptophan 84–glutamine 85 serves as a coordination point for mRNA. Positions tryptophan 101–serine 105 are EIF4EBP1/2/3 binding. Residue tryptophan 130–glutamate 131 coordinates mRNA. The segment at glutamate 160 to glycine 167 is EIF4EBP1/2/3 binding. MRNA contacts are provided by residues arginine 185 to lysine 190 and alanine 233 to serine 235.

The protein belongs to the eukaryotic initiation factor 4E family. As to quaternary structure, EIF4F is a multi-subunit complex, the composition of which varies with external and internal environmental conditions. It is composed of at least EIF4A, EIF4E and EIF4G.

In terms of biological role, recognizes and binds the 7-methylguanosine-containing mRNA cap during an early step in the initiation of protein synthesis and facilitates ribosome binding by inducing the unwinding of the mRNAs secondary structures. The protein is Eukaryotic translation initiation factor 4E type 1B (Eif4e1b) of Mus musculus (Mouse).